The following is a 2230-amino-acid chain: Golgin subfamily A member 4 (2230 aa).

The tract at residues 1-64 (MFKKLKQKIS…SGDTQSFAQK (64 aa)) is disordered. Phosphoserine is present on Ser-10. Positions 12-41 (EQQQLQQALAPAQASSNSSTPTRMRSRTSS) are enriched in low complexity. Thr-39 carries the post-translational modification Phosphothreonine. Ser-41, Ser-71, Ser-78, and Ser-89 each carry phosphoserine. A compositionally biased stretch (basic and acidic residues) spans 87–107 (SSSKESLVRTSSRESLNRLDL). The disordered stretch occupies residues 87 to 127 (SSSKESLVRTSSRESLNRLDLDSSTASFDPPSDMDSEAEDL). The tract at residues 133–203 (SLNKEQLIQR…EELQMDQQAK (71 aa)) is interaction with MACF1. The stretch at 133-2185 (SLNKEQLIQR…EYLRKVLFEY (2053 aa)) forms a coiled coil. Ser-266 carries the post-translational modification Phosphoserine. N-linked (GlcNAc...) asparagine glycans are attached at residues Asn-585 and Asn-1612. The GRIP domain maps to 2168-2215 (LFGEPTEFEYLRKVLFEYMMGRETKTMAKVITTVLKFPDDQTQKILER). Thr-2223 carries the post-translational modification Phosphothreonine.

In terms of assembly, homodimer. Interacts with RAB6A. Interacts with GTP-bound ARL1 and ARL3. Interacts with MACF1. Directly interacts with TBC1D23. Interacts with FAM91A1; this interaction may be mediated by TBC1D23.

It localises to the cytoplasm. The protein localises to the golgi apparatus membrane. The protein resides in the golgi apparatus. Its subcellular location is the trans-Golgi network membrane. Functionally, involved in vesicular trafficking at the Golgi apparatus level. May play a role in delivery of transport vesicles containing GPI-linked proteins from the trans-Golgi network through its interaction with MACF1. Involved in endosome-to-Golgi trafficking. The protein is Golgin subfamily A member 4 (GOLGA4) of Homo sapiens (Human).